The chain runs to 132 residues: ATP synthase epsilon chain (132 aa).

Belongs to the ATPase epsilon chain family. F-type ATPases have 2 components, CF(1) - the catalytic core - and CF(0) - the membrane proton channel. CF(1) has five subunits: alpha(3), beta(3), gamma(1), delta(1), epsilon(1). CF(0) has three main subunits: a, b and c.

Its subcellular location is the cell inner membrane. Its function is as follows. Produces ATP from ADP in the presence of a proton gradient across the membrane. This is ATP synthase epsilon chain from Anaeromyxobacter sp. (strain K).